Here is a 1328-residue protein sequence, read N- to C-terminus: Retrovirus-related Pol polyprotein from transposon TNT 1-94 (1328 aa).

The tract at residues 189–265 (PENQGQALIT…SGQKNDDNTA (77 aa)) is disordered. Positions 217 to 229 (ARGKSKNRSKSRV) are enriched in basic residues. Residues 230-247 (RNCYNCNQPGHFKRDCPN) form a CCHC-type zinc finger. Residues 241–253 (FKRDCPNPRKGKG) are compositionally biased toward basic and acidic residues. The active-site For protease activity is the D297. Positions 473 to 642 (SSERKLNILD…IPERVWTNKE (170 aa)) constitute an Integrase catalytic domain. Polar residues predominate over residues 729-742 (TIPSTSNNPTSAES). The interval 729-800 (TIPSTSNNPT…RVESRRYPST (72 aa)) is disordered. A compositionally biased stretch (basic and acidic residues) spans 770–798 (EVEHPTQGEEQHQPLRRSERPRVESRRYP).

It carries out the reaction DNA(n) + a 2'-deoxyribonucleoside 5'-triphosphate = DNA(n+1) + diphosphate. In Nicotiana tabacum (Common tobacco), this protein is Retrovirus-related Pol polyprotein from transposon TNT 1-94.